The following is a 1115-amino-acid chain: Disheveled-associated activator of morphogenesis 2 (1115 aa).

Residues 40 to 416 form the GBD/FH3 domain; that stretch reads GPIPNPEELN…QIVLQDERGV (377 aa). The stretch at 434–515 forms a coiled coil; sequence MLINENEVKQ…ELVARHNESS (82 aa). Disordered stretches follow at residues 510 to 605 and 655 to 697; these read RHNE…SHPL and QEGP…SATG. The 177-residue stretch at 518–694 folds into the FH1 domain; it reads PVSSPPPPGG…TEKASRSMVS (177 aa). Over residues 540 to 583 the composition is skewed to pro residues; that stretch reads LPPPPPPLPFDSCPPPPAPPLPPGGPPIPPGAPPCFSSGPPPSH. Positions 595 to 1042 constitute an FH2 domain; the sequence is KKRIPQPSHP…DERRARMEFM (448 aa). The DAD domain occupies 1065–1095; the sequence is EESGEFDDLVSALRSGEVFDKDLSKFKRNRK.

Belongs to the formin homology family. In terms of assembly, interacts with DVL3. Interacts with INF2. As to expression, in early embryogenesis, expression is confined to embryonic ectoderm. Highly dynamic expression in later stages of gastrulation. In early somite stages, detected in posterior node and persists until 9-10 somites have developed when expression is concentrated in the chordoneural hinge. During organogenesis, expressed in the CNS, PNS, liver primordia, limb buds and genital tubercle.

Functionally, key regulator of the Wnt signaling pathway, which is required for various processes during development, such as dorsal patterning, determination of left/right symmetry or myelination in the central nervous system. Acts downstream of Wnt ligands and upstream of beta-catenin (CTNNB1). Required for canonical Wnt signaling pathway during patterning in the dorsal spinal cord by promoting the aggregation of Disheveled (Dvl) complexes, thereby clustering and formation of Wnt receptor signalosomes and potentiating Wnt activity. During dorsal patterning of the spinal cord, inhibits oligodendrocytes differentiation via interaction with PIP5K1A. Also regulates non-canonical Wnt signaling pathway. Acts downstream of PITX2 in the developing gut and is required for left/right asymmetry within dorsal mesentery: affects mesenchymal condensation by lengthening cadherin-based junctions through WNT5A and non-canonical Wnt signaling, inducing polarized condensation in the left dorsal mesentery necessary to initiate gut rotation. Together with DAAM1, required for myocardial maturation and sarcomere assembly. Is a regulator of actin nucleation and elongation, filopodia formation and podocyte migration. This Mus musculus (Mouse) protein is Disheveled-associated activator of morphogenesis 2.